The primary structure comprises 73 residues: Cell division protein ZapB (73 aa).

The stretch at 3-69 (LELLSKLETK…EKVTGLVGLL (67 aa)) forms a coiled coil. Residues 30–50 (EKQKSSTLSEHNQQLNEQNQQ) form a disordered region. Residues 41 to 50 (NQQLNEQNQQ) are compositionally biased toward low complexity.

The protein belongs to the ZapB family. Homodimer. The ends of the coiled-coil dimer bind to each other, forming polymers. Interacts with FtsZ.

The protein localises to the cytoplasm. Functionally, non-essential, abundant cell division factor that is required for proper Z-ring formation. It is recruited early to the divisome by direct interaction with FtsZ, stimulating Z-ring assembly and thereby promoting cell division earlier in the cell cycle. Its recruitment to the Z-ring requires functional FtsA or ZipA. This chain is Cell division protein ZapB, found in Shewanella putrefaciens (strain CN-32 / ATCC BAA-453).